The chain runs to 203 residues: Probable flagellin 1 (203 aa).

The propeptide occupies 1–6 (MRRRRG).

The protein belongs to the archaeal flagellin family.

It localises to the archaeal flagellum. In terms of biological role, flagellin is the subunit protein which polymerizes to form the filaments of archaeal flagella. This chain is Probable flagellin 1 (flaB1), found in Aeropyrum pernix (strain ATCC 700893 / DSM 11879 / JCM 9820 / NBRC 100138 / K1).